The following is a 385-amino-acid chain: Beta-lactamase (385 aa).

An N-terminal signal peptide occupies residues 1-20 (MKRLLAFCLLFFAALGQAKV). Ser-84 functions as the Acyl-ester intermediate in the catalytic mechanism. Tyr-170 acts as the Proton acceptor in catalysis. Residue 335–337 (KTG) coordinates substrate.

The protein belongs to the class-C beta-lactamase family.

Its subcellular location is the periplasm. The enzyme catalyses a beta-lactam + H2O = a substituted beta-amino acid. Functionally, this protein is a serine beta-lactamase with a substrate specificity for cephalosporins. The sequence is that of Beta-lactamase from Lysobacter lactamgenus.